We begin with the raw amino-acid sequence, 152 residues long: Deoxyuridine 5'-triphosphate nucleotidohydrolase (152 aa).

Substrate-binding positions include 71–73 (RSG), Asn-84, 88–90 (LID), and Met-98.

The protein belongs to the dUTPase family. As to quaternary structure, homotrimer. Mg(2+) is required as a cofactor.

The enzyme catalyses dUTP + H2O = dUMP + diphosphate + H(+). The protein operates within pyrimidine metabolism; dUMP biosynthesis; dUMP from dCTP (dUTP route): step 2/2. Its function is as follows. This enzyme is involved in nucleotide metabolism: it produces dUMP, the immediate precursor of thymidine nucleotides and it decreases the intracellular concentration of dUTP so that uracil cannot be incorporated into DNA. The polypeptide is Deoxyuridine 5'-triphosphate nucleotidohydrolase (Escherichia coli O1:K1 / APEC).